We begin with the raw amino-acid sequence, 673 residues long: DNA ligase (673 aa).

NAD(+) is bound by residues 34–38 (DAEYD), 83–84 (SL), and E116. The active-site N6-AMP-lysine intermediate is the K118. NAD(+)-binding residues include R139, E176, K293, and K317. Positions 411, 414, 429, and 435 each coordinate Zn(2+). Residues 595–673 (NQQNPFFGKT…EDEFLKWVNS (79 aa)) form the BRCT domain.

It belongs to the NAD-dependent DNA ligase family. LigA subfamily. The cofactor is Mg(2+). Mn(2+) is required as a cofactor.

It catalyses the reaction NAD(+) + (deoxyribonucleotide)n-3'-hydroxyl + 5'-phospho-(deoxyribonucleotide)m = (deoxyribonucleotide)n+m + AMP + beta-nicotinamide D-nucleotide.. Functionally, DNA ligase that catalyzes the formation of phosphodiester linkages between 5'-phosphoryl and 3'-hydroxyl groups in double-stranded DNA using NAD as a coenzyme and as the energy source for the reaction. It is essential for DNA replication and repair of damaged DNA. This chain is DNA ligase, found in Legionella pneumophila (strain Paris).